A 640-amino-acid chain; its full sequence is EF-hand domain-containing protein 1 (640 aa).

Residues 1 to 45 (MVSNPVHGLPFLPGTSFKDSTKTAFHRSQTLSYRNGYAIVRRPTV) form a required for its localization in the mitotic spindle and interaction with alpha-tubulin region. DM10 domains are found at residues 93-198 (DKKV…ESQG), 239-359 (DKQV…KEKF), and 416-520 (DNKV…ESNA). A disordered region spans residues 535-554 (VRKREAPAPEAESKQTEKDP). A compositionally biased stretch (basic and acidic residues) spans 538–554 (REAPAPEAESKQTEKDP). The 36-residue stretch at 574–609 (SCKDNIREAFQIYDKEASGYVDRDMFFKICESLNVP) folds into the EF-hand domain.

As to quaternary structure, microtubule inner protein component of sperm flagellar doublet microtubules. Interacts with the C-terminus of CACNA1E. Interacts with alpha-tubulin. Widely expressed. Not detected in lymphocytes.

The protein resides in the cytoplasm. It localises to the cytoskeleton. The protein localises to the cilium axoneme. It is found in the flagellum axoneme. Its subcellular location is the microtubule organizing center. The protein resides in the centrosome. It localises to the spindle. The protein localises to the spindle pole. Microtubule inner protein (MIP) part of the dynein-decorated doublet microtubules (DMTs) in cilia axoneme, which is required for motile cilia beating. Microtubule-associated protein which regulates cell division and neuronal migration during cortical development. Necessary for radial and tangential cell migration during brain development, possibly acting as a regulator of cell morphology and process formation during migration. May enhance calcium influx through CACNA1E and stimulate programmed cell death. The sequence is that of EF-hand domain-containing protein 1 from Homo sapiens (Human).